Here is a 243-residue protein sequence, read N- to C-terminus: Phosphoribosylaminoimidazole-succinocarboxamide synthase (243 aa).

It belongs to the SAICAR synthetase family.

The enzyme catalyses 5-amino-1-(5-phospho-D-ribosyl)imidazole-4-carboxylate + L-aspartate + ATP = (2S)-2-[5-amino-1-(5-phospho-beta-D-ribosyl)imidazole-4-carboxamido]succinate + ADP + phosphate + 2 H(+). Its pathway is purine metabolism; IMP biosynthesis via de novo pathway; 5-amino-1-(5-phospho-D-ribosyl)imidazole-4-carboxamide from 5-amino-1-(5-phospho-D-ribosyl)imidazole-4-carboxylate: step 1/2. The polypeptide is Phosphoribosylaminoimidazole-succinocarboxamide synthase (Methanobrevibacter smithii (strain ATCC 35061 / DSM 861 / OCM 144 / PS)).